We begin with the raw amino-acid sequence, 104 residues long: Pyrimidine/purine nucleoside phosphorylase (104 aa).

The protein belongs to the nucleoside phosphorylase PpnP family.

The catalysed reaction is a purine D-ribonucleoside + phosphate = a purine nucleobase + alpha-D-ribose 1-phosphate. The enzyme catalyses adenosine + phosphate = alpha-D-ribose 1-phosphate + adenine. It carries out the reaction cytidine + phosphate = cytosine + alpha-D-ribose 1-phosphate. It catalyses the reaction guanosine + phosphate = alpha-D-ribose 1-phosphate + guanine. The catalysed reaction is inosine + phosphate = alpha-D-ribose 1-phosphate + hypoxanthine. The enzyme catalyses thymidine + phosphate = 2-deoxy-alpha-D-ribose 1-phosphate + thymine. It carries out the reaction uridine + phosphate = alpha-D-ribose 1-phosphate + uracil. It catalyses the reaction xanthosine + phosphate = alpha-D-ribose 1-phosphate + xanthine. Catalyzes the phosphorolysis of diverse nucleosides, yielding D-ribose 1-phosphate and the respective free bases. Can use uridine, adenosine, guanosine, cytidine, thymidine, inosine and xanthosine as substrates. Also catalyzes the reverse reactions. The polypeptide is Pyrimidine/purine nucleoside phosphorylase (Leptothrix cholodnii (strain ATCC 51168 / LMG 8142 / SP-6) (Leptothrix discophora (strain SP-6))).